The sequence spans 1037 residues: Caspase recruitment domain-containing protein 6 (1037 aa).

A2 carries the post-translational modification N-acetylalanine. One can recognise a CARD domain in the interval 3 to 94 (TESTPSEIIE…QSAAICGLRH (92 aa)). A Phosphoserine modification is found at S154. Disordered regions lie at residues 235–270 (DPEHVGYDGEEDFENSETTEFSGEEPSYEGSETSLS), 669–704 (VSSGENMAGTAEGEGQQRHSQLKSSSKSQALMPIQE), and 887–1037 (RTSH…GGKH). The span at 242–261 (DGEEDFENSETTEFSGEEPS) shows a compositional bias: acidic residues. The span at 690–699 (LKSSSKSQAL) shows a compositional bias: low complexity. Polar residues-rich tracts occupy residues 911 to 928 (ASQQGVQMKTQGGASNPA), 938 to 954 (KSSQFKSDQSNPSTVKH), and 963 to 984 (VPSQPKSSQTKSCQSQPSQTKP). S985 carries the phosphoserine modification. Pro residues predominate over residues 994–1012 (PSQPWPPQSKPSQPRPPQP). Residues 1023–1037 (KAHHSKAGQKRGGKH) show a composition bias toward basic residues.

In terms of biological role, may be involved in apoptosis. The chain is Caspase recruitment domain-containing protein 6 (CARD6) from Homo sapiens (Human).